A 144-amino-acid polypeptide reads, in one-letter code: Large ribosomal subunit protein uL16 (144 aa).

The protein belongs to the universal ribosomal protein uL16 family. Part of the 50S ribosomal subunit.

In terms of biological role, binds 23S rRNA and is also seen to make contacts with the A and possibly P site tRNAs. The protein is Large ribosomal subunit protein uL16 of Ligilactobacillus salivarius (strain UCC118) (Lactobacillus salivarius).